We begin with the raw amino-acid sequence, 309 residues long: Anamorsin homolog (309 aa).

Residues 4 to 169 form an N-terminal SAM-like domain region; it reads VSPGHSVLLL…SYEVGSSAQL (166 aa). The linker stretch occupies residues 170–218; that stretch reads TLSFAKKKQVEKPKLDENTAKIWSLSAVDMNDDDIDLLDPDELLDEEDL. [2Fe-2S] cluster-binding residues include Cys230, Cys242, Cys245, and Cys247. The fe-S binding site A stretch occupies residues 230-247; the sequence is CGTGGDTKKRKACKNCTC. Residues Cys270, Cys273, Cys281, and Cys284 each contribute to the [4Fe-4S] cluster site. Short sequence motifs (cx2C motif) lie at residues 270 to 273 and 281 to 284; these read CGNC and CASC. Positions 270 to 284 are fe-S binding site B; it reads CGNCYLGDAFRCASC.

It belongs to the anamorsin family. In terms of assembly, monomer. [2Fe-2S] cluster is required as a cofactor. [4Fe-4S] cluster serves as cofactor.

It localises to the cytoplasm. Its subcellular location is the mitochondrion intermembrane space. Component of the cytosolic iron-sulfur (Fe-S) protein assembly (CIA) machinery. Required for the maturation of extramitochondrial Fe-S proteins. Part of an electron transfer chain functioning in an early step of cytosolic Fe-S biogenesis, facilitating the de novo assembly of a [4Fe-4S] cluster on the cytosolic Fe-S scaffold complex. Electrons are transferred from NADPH via a FAD- and FMN-containing diflavin oxidoreductase. Together with the diflavin oxidoreductase, also required for the assembly of the diferric tyrosyl radical cofactor of ribonucleotide reductase (RNR), probably by providing electrons for reduction during radical cofactor maturation in the catalytic small subunit. The polypeptide is Anamorsin homolog (Branchiostoma floridae (Florida lancelet)).